The following is a 156-amino-acid chain: Peroxisome assembly protein 22 (156 aa).

Residues 24-46 (LSIIAVGVLSTVAVTVGYLLYLY) form a helical membrane-spanning segment.

This sequence belongs to the peroxin-22 family.

Its subcellular location is the peroxisome membrane. Its function is as follows. Involved in peroxisome biogenesis. In Kluyveromyces lactis (strain ATCC 8585 / CBS 2359 / DSM 70799 / NBRC 1267 / NRRL Y-1140 / WM37) (Yeast), this protein is Peroxisome assembly protein 22 (PEX22).